The primary structure comprises 490 residues: MKEIDELTIKEYGVDSRILMERAGISVVLAMEEELGNLSDYRFLVLCGGGNNGGDGFVVARNLLGVVKDVLVVFLGKKKTPDCEYNYGLYKKFGGKVVEQFEPSILNEFDVVVDAIFGTGLRGEITGEYAEIINLVNKSGKVVVSVDVPSGIDSNTGKVLRTAVKADLTVTFGVPKIGHILFPGRDLTGKLKVANIGHPVHLINSINRYVITREMVRSLLPERPRDSHKGTYGKVLIIAGSRLYSGAPVLSGMGSLKVGTGLVKLAVPFPQNLIATSRFPELISVPIDTEKGFFSLQNLQECLELSKDVDVVAIGPGLGNNEHVREFVNEFLKTLEKPAVIDADAINVLDTSVLKERKSPAVLTPHPGEMARLVKKTVGDVKYNYELAEEFAKENDCVLVLKSATTIVTDGEKTLFNITGNTGLSKGGSGDVLTGMIAGFIAQGLSPLEASTVSVYLHGFAAELFEQDERGLTASELLRLIPEAIRRLKE.

The YjeF N-terminal domain maps to 1 to 204 (MKEIDELTIK…NIGHPVHLIN (204 aa)). The tract at residues 1 to 204 (MKEIDELTIK…NIGHPVHLIN (204 aa)) is NAD(P)H-hydrate epimerase. The tract at residues 51 to 55 (NNGGD) is NADPHX 1; for epimerase activity. Residues Asn-52 and Asp-114 each coordinate K(+). Positions 118-124 (GTGLRGE) are NADPHX 1; for epimerase activity. (6S)-NADPHX is bound by residues Tyr-129 and Asp-147. Residue Ser-150 coordinates K(+). The 277-residue stretch at 212 to 488 (TREMVRSLLP…RLIPEAIRRL (277 aa)) folds into the YjeF C-terminal domain. The segment at 212 to 490 (TREMVRSLLP…IPEAIRRLKE (279 aa)) is ADP-dependent (S)-NAD(P)H-hydrate dehydratase. Gly-317 serves as a coordination point for (6S)-NADPHX. Residues 366–372 (HPGEMAR) are NADPHX 2; for dehydratase activity. ADP contacts are provided by residues 402–406 (KSATT) and 421–430 (NTGLSKGGSG). Residue Asp-431 participates in (6S)-NADPHX binding.

In the N-terminal section; belongs to the NnrE/AIBP family. This sequence in the C-terminal section; belongs to the NnrD/CARKD family. It depends on K(+) as a cofactor.

It catalyses the reaction (6S)-NADHX + ADP = AMP + phosphate + NADH + H(+). The catalysed reaction is (6S)-NADPHX + ADP = AMP + phosphate + NADPH + H(+). The enzyme catalyses (6R)-NADHX = (6S)-NADHX. It carries out the reaction (6R)-NADPHX = (6S)-NADPHX. Functionally, bifunctional enzyme that catalyzes the epimerization of the S- and R-forms of NAD(P)HX and the dehydration of the S-form of NAD(P)HX at the expense of ADP, which is converted to AMP. This allows the repair of both epimers of NAD(P)HX, a damaged form of NAD(P)H that is a result of enzymatic or heat-dependent hydration. The sequence is that of Bifunctional NAD(P)H-hydrate repair enzyme Nnr (nnr) from Thermotoga maritima (strain ATCC 43589 / DSM 3109 / JCM 10099 / NBRC 100826 / MSB8).